The chain runs to 142 residues: Hemoglobin A subunit alpha-2 (142 aa).

In terms of domain architecture, Globin spans 2–142 (VLTAGDKANV…VAQNLTSKYR (141 aa)). His-59 contacts O2. Residue His-88 coordinates heme b.

It belongs to the globin family. In terms of assembly, tetramer of alpha-1, alpha-2 and two identical beta chains. In terms of tissue distribution, red blood cells.

Involved in oxygen transport from the lung to the various peripheral tissues. The protein is Hemoglobin A subunit alpha-2 of Aldabrachelys gigantea (Aldabra giant tortoise).